The chain runs to 263 residues: Imidazole glycerol phosphate synthase subunit HisF (263 aa).

Residues aspartate 11 and aspartate 130 contribute to the active site.

The protein belongs to the HisA/HisF family. Heterodimer of HisH and HisF.

It is found in the cytoplasm. It catalyses the reaction 5-[(5-phospho-1-deoxy-D-ribulos-1-ylimino)methylamino]-1-(5-phospho-beta-D-ribosyl)imidazole-4-carboxamide + L-glutamine = D-erythro-1-(imidazol-4-yl)glycerol 3-phosphate + 5-amino-1-(5-phospho-beta-D-ribosyl)imidazole-4-carboxamide + L-glutamate + H(+). The protein operates within amino-acid biosynthesis; L-histidine biosynthesis; L-histidine from 5-phospho-alpha-D-ribose 1-diphosphate: step 5/9. In terms of biological role, IGPS catalyzes the conversion of PRFAR and glutamine to IGP, AICAR and glutamate. The HisF subunit catalyzes the cyclization activity that produces IGP and AICAR from PRFAR using the ammonia provided by the HisH subunit. The polypeptide is Imidazole glycerol phosphate synthase subunit HisF (Synechococcus sp. (strain CC9311)).